Consider the following 4561-residue polypeptide: StAR-related lipid transfer protein 9 (4561 aa).

The Kinesin motor domain maps to 3-384 (NVQVAVRVRP…MRYASNAKNI (382 aa)). 103 to 110 (GQTGSGKT) contributes to the ATP binding site. Low complexity predominate over residues 307–321 (SSGGDSGVPSTTSGA). Residues 307 to 330 (SSGGDSGVPSTTSGASSGGGPARR) form a disordered region. Positions 482-533 (TKIGRIDSDQEQDIVLQGQWIERDHCTITSTCGVVILRPTQGARCTVNGREV) constitute an FHA domain. Disordered regions lie at residues 784-805 (SRAP…RRSR), 873-1064 (SRWR…DTES), and 1092-1153 (WNLP…PSDS). 4 stretches are compositionally biased toward polar residues: residues 789-805 (WASS…RRSR), 884-903 (ASTQ…SQEI), 911-920 (CQMSSQGQST), and 939-948 (RWASVNTKTG). 2 stretches are compositionally biased toward basic and acidic residues: residues 1046-1060 (RPIK…RDLS) and 1124-1135 (SRGEYSMKDHGH). Serine 1164 carries the post-translational modification Phosphoserine. Disordered regions lie at residues 1288–1392 (PSGD…SDMS), 1700–1767 (REAW…EEEN), 1959–1980 (ECKA…EEKQ), 2077–2120 (TNAT…ADRL), 2320–2356 (LATG…LGGS), 2384–2427 (VSTS…SSLD), 2439–2467 (FLLQ…LPNS), 2622–2656 (KPRQ…DPLP), 2712–2735 (KDSI…SEKI), 2777–2800 (TGLE…GNVG), 3002–3067 (RSVE…PGTL), 3185–3207 (AQTE…REQL), 3246–3286 (ELNL…TSLK), 3645–3703 (EGAA…LRPE), 3790–3847 (SDLA…PQQS), and 3863–3913 (QPKT…GRTT). Residues 1300–1321 (DIHEIQPHDEKPKHWLSIEEPK) show a composition bias toward basic and acidic residues. 2 stretches are compositionally biased toward polar residues: residues 1328-1360 (LPQS…SQGL) and 1722-1741 (PKLS…TTTK). 2 stretches are compositionally biased toward basic and acidic residues: residues 1754-1767 (ELGK…EEEN) and 1970-1980 (QSKEEPLEEKQ). The span at 2077–2091 (TNATSNNNTQIQKLT) shows a compositional bias: polar residues. Positions 2096 to 2110 (RSREYVQTRESESEH) are enriched in basic and acidic residues. 2 stretches are compositionally biased toward polar residues: residues 2333 to 2351 (TRSS…TTHT) and 2399 to 2408 (TSTGSTTQEA). Residues 2414 to 2463 (EATVQKERKNSSLDRISRQAEKRVSFLLQEDSNQGEEERQKAEETSEDQQ) adopt a coiled-coil conformation. Positions 2417–2427 (VQKERKNSSLD) are enriched in basic and acidic residues. Basic and acidic residues predominate over residues 2634 to 2647 (DSSEVIEKRKEASR). Composition is skewed to polar residues over residues 3039–3054 (LKNN…SQTM) and 3187–3199 (TEPS…THSQ). Over residues 3689–3700 (PASPDGSPPPSL) the composition is skewed to pro residues. Basic and acidic residues predominate over residues 3812–3835 (DSQRAESLDREGKSPLGKSSERLL). Residues 3863–3874 (QPKTTTGDQSKL) are compositionally biased toward polar residues. Residues 4185-4224 (SDIELMLQEYRRAREEAKVEIAQARDRLKERTEQEKMRIR) are a coiled coil. Residues 4344–4561 (PYQDLAKHIV…VAKLASFLRS (218 aa)) form the START domain.

Belongs to the TRAFAC class myosin-kinesin ATPase superfamily. Kinesin family. Interacts with ATAD3A.

It is found in the cytoplasm. Its subcellular location is the cytoskeleton. It localises to the microtubule organizing center. The protein resides in the centrosome. The protein localises to the centriole. It is found in the nucleus. Microtubule-dependent motor protein required for spindle pole assembly during mitosis. Required to stabilize the pericentriolar material (PCM). The chain is StAR-related lipid transfer protein 9 (Stard9) from Mus musculus (Mouse).